The following is a 138-amino-acid chain: ATP synthase epsilon chain, chloroplastic (138 aa).

This sequence belongs to the ATPase epsilon chain family. As to quaternary structure, F-type ATPases have 2 components, CF(1) - the catalytic core - and CF(0) - the membrane proton channel. CF(1) has five subunits: alpha(3), beta(3), gamma(1), delta(1), epsilon(1). CF(0) has three main subunits: a, b and c.

The protein localises to the plastid. The protein resides in the chloroplast thylakoid membrane. In terms of biological role, produces ATP from ADP in the presence of a proton gradient across the membrane. In Huperzia lucidula (Shining clubmoss), this protein is ATP synthase epsilon chain, chloroplastic.